The chain runs to 374 residues: Alanine racemase (374 aa).

Catalysis depends on Lys-44, which acts as the Proton acceptor; specific for D-alanine. An N6-(pyridoxal phosphate)lysine modification is found at Lys-44. Residue Arg-139 coordinates substrate. Residue Tyr-269 is the Proton acceptor; specific for L-alanine of the active site. Met-317 lines the substrate pocket.

Belongs to the alanine racemase family. Requires pyridoxal 5'-phosphate as cofactor.

The enzyme catalyses L-alanine = D-alanine. It functions in the pathway amino-acid biosynthesis; D-alanine biosynthesis; D-alanine from L-alanine: step 1/1. Catalyzes the interconversion of L-alanine and D-alanine. May also act on other amino acids. This chain is Alanine racemase (alr), found in Bordetella avium (strain 197N).